The sequence spans 325 residues: NADH-quinone oxidoreductase subunit H (325 aa).

8 helical membrane passes run 11 to 31, 81 to 101, 114 to 134, 154 to 174, 186 to 206, 237 to 257, 265 to 285, and 304 to 324; these read ILLS…CGAF, VIFT…FAIV, IGIL…LFAG, LSYE…AGSF, IWNV…GVAV, FFVG…TLFF, LPPF…FILI, and VCLP…LWQA.

It belongs to the complex I subunit 1 family. As to quaternary structure, NDH-1 is composed of 13 different subunits. Subunits NuoA, H, J, K, L, M, N constitute the membrane sector of the complex.

The protein resides in the cell inner membrane. It carries out the reaction a quinone + NADH + 5 H(+)(in) = a quinol + NAD(+) + 4 H(+)(out). NDH-1 shuttles electrons from NADH, via FMN and iron-sulfur (Fe-S) centers, to quinones in the respiratory chain. The immediate electron acceptor for the enzyme in this species is believed to be ubiquinone. Couples the redox reaction to proton translocation (for every two electrons transferred, four hydrogen ions are translocated across the cytoplasmic membrane), and thus conserves the redox energy in a proton gradient. This subunit may bind ubiquinone. This is NADH-quinone oxidoreductase subunit H from Enterobacter sp. (strain 638).